The following is a 251-amino-acid chain: UPF0309 protein GK1441 (251 aa).

The 184-residue stretch at 31–214 (VSEAIQNGGI…VLMAENGIEP (184 aa)) folds into the SIS domain.

This sequence belongs to the UPF0309 family.

In Geobacillus kaustophilus (strain HTA426), this protein is UPF0309 protein GK1441.